A 307-amino-acid polypeptide reads, in one-letter code: Plasmodesmata-located protein 2 (307 aa).

Residues 1–23 form the signal peptide; sequence MGLSISFLSIIMMMCLLFPDLNV. Residues 24-275 lie on the Extracellular side of the membrane; that stretch reads VVKSATTEYT…STSTGATGKT (252 aa). Gnk2-homologous domains lie at 33-136 and 141-240; these read TTLI…VSGF and GMEM…YYPN. Intrachain disulfides connect Cys-40–Cys-114, Cys-90–Cys-99, Cys-102–Cys-127, Cys-149–Cys-218, Cys-194–Cys-203, and Cys-206–Cys-231. Low complexity predominate over residues 246 to 268; that stretch reads SSSSSSSSSSSSSGSSNSDPSTS. Residues 246–270 form a disordered region; it reads SSSSSSSSSSSSSGSSNSDPSTSTG. The helical transmembrane segment at 276 to 296 threads the bilayer; it reads VAIIVGGAAGVGFLVICLLFA. The tract at residues 276–296 is necessary and sufficient for plasmodesmal targeting; the sequence is VAIIVGGAAGVGFLVICLLFA. Residues 297 to 307 lie on the Cytoplasmic side of the membrane; sequence KNLMRKKHDDY.

It belongs to the cysteine-rich repeat secretory protein family. Plasmodesmata-located proteins (PDLD) subfamily. As to quaternary structure, (Microbial infection) Interacts with Grapevine fanleaf virus (GFLV) 2B-MP. In terms of tissue distribution, highly expressed in inflorescence shoot apex. Uniformly expressed within the inflorescence meristem with the exception of a boundary zone between floral primordia and the meristem where the expression is weaker (at protein level).

It is found in the cell membrane. Its subcellular location is the cell junction. The protein localises to the plasmodesma. Functionally, modulates cell-to-cell trafficking. In Arabidopsis thaliana (Mouse-ear cress), this protein is Plasmodesmata-located protein 2.